The following is a 572-amino-acid chain: RNA polymerase sigma factor sigB (572 aa).

A chloroplast-targeting transit peptide spans 1 to 39; sequence MSSCLLPQFKCPPDSFSIHFRTSFCAPKHNKGSVFFQPQ. The tract at residues 215 to 249 is disordered; the sequence is TRQTERKARRAKGLEKTASGIPSVKTGSSPKKKRL. The Polymerase core binding signature appears at 360–373; it reads DLVQEGCRGLVRGA. Positions 530–549 form a DNA-binding region, H-T-H motif; it reads LQEIGEMMGVSRERVRQIES.

This sequence belongs to the sigma-70 factor family. In terms of tissue distribution, highly expressed in cotyledons, to a lesser extent in leaves, sepals and siliques, and barely expressed in roots. Present in seedlings.

Its subcellular location is the plastid. It localises to the chloroplast. Its function is as follows. Required for the transition of plastids into chloroplasts by coordinating nuclear and chloroplastic genomes under light conditions. Sigma factors are initiation factors that promote the attachment of plastid-encoded RNA polymerase (PEP) to specific initiation sites and are then released. Promotes the biosynthesis of plastid-encoded tRNAs (e.g. trnE-UUC and trnV-UAC). The chain is RNA polymerase sigma factor sigB (SIGB) from Arabidopsis thaliana (Mouse-ear cress).